The sequence spans 128 residues: MALPASMRLRGHRCFNRLHRIGRRHHGDWMVLRVMPEEPRLLRPELRRHPTRCCRCALVISSKVSKRAVRRNRLRRLLHQHLRQQLEHRGDLAGRWVLISLRPEASEAEPSQLLEECDSLLSSAGLGQ.

Belongs to the RnpA family. Consists of a catalytic RNA component (M1 or rnpB) and a protein subunit.

The catalysed reaction is Endonucleolytic cleavage of RNA, removing 5'-extranucleotides from tRNA precursor.. Functionally, RNaseP catalyzes the removal of the 5'-leader sequence from pre-tRNA to produce the mature 5'-terminus. It can also cleave other RNA substrates such as 4.5S RNA. The protein component plays an auxiliary but essential role in vivo by binding to the 5'-leader sequence and broadening the substrate specificity of the ribozyme. The polypeptide is Ribonuclease P protein component (Parasynechococcus marenigrum (strain WH8102)).